Consider the following 444-residue polypeptide: Tubulin beta-7 chain (444 aa).

GTP is bound by residues Gln11, Glu69, Ser138, Gly142, Thr143, Gly144, Asn204, and Asn226. Glu69 contributes to the Mg(2+) binding site.

It belongs to the tubulin family. Dimer of alpha and beta chains. A typical microtubule is a hollow water-filled tube with an outer diameter of 25 nm and an inner diameter of 15 nM. Alpha-beta heterodimers associate head-to-tail to form protofilaments running lengthwise along the microtubule wall with the beta-tubulin subunit facing the microtubule plus end conferring a structural polarity. Microtubules usually have 13 protofilaments but different protofilament numbers can be found in some organisms and specialized cells. Mg(2+) is required as a cofactor.

It localises to the cytoplasm. It is found in the cytoskeleton. Tubulin is the major constituent of microtubules, a cylinder consisting of laterally associated linear protofilaments composed of alpha- and beta-tubulin heterodimers. Microtubules grow by the addition of GTP-tubulin dimers to the microtubule end, where a stabilizing cap forms. Below the cap, tubulin dimers are in GDP-bound state, owing to GTPase activity of alpha-tubulin. In Gossypium hirsutum (Upland cotton), this protein is Tubulin beta-7 chain.